Reading from the N-terminus, the 61-residue chain is Small ribosomal subunit protein uS14 (61 aa).

Zn(2+) contacts are provided by cysteine 24, cysteine 27, cysteine 40, and cysteine 43.

This sequence belongs to the universal ribosomal protein uS14 family. Zinc-binding uS14 subfamily. In terms of assembly, part of the 30S ribosomal subunit. Contacts proteins S3 and S10. Requires Zn(2+) as cofactor.

Binds 16S rRNA, required for the assembly of 30S particles and may also be responsible for determining the conformation of the 16S rRNA at the A site. The sequence is that of Small ribosomal subunit protein uS14 from Lachnospira eligens (strain ATCC 27750 / DSM 3376 / VPI C15-48 / C15-B4) (Eubacterium eligens).